Consider the following 298-residue polypeptide: 1,2-dihydroxynaphthalene dioxygenase (298 aa).

2 consecutive VOC domains span residues 6–121 (ELGY…IFYG) and 146–267 (GIGH…FGWG). Histidine 149 is a binding site for Fe cation. Substrate contacts are provided by residues histidine 149, 196 to 197 (QH), histidine 212, and tyrosine 253. Histidine 212 contributes to the Fe cation binding site. Glutamate 263 lines the Fe cation pocket.

It belongs to the extradiol ring-cleavage dioxygenase family. In terms of assembly, homooctamer. Requires Fe(2+) as cofactor.

It catalyses the reaction naphthalene-1,2-diol + O2 = 2-hydroxychromene-2-carboxylate + H(+). Its pathway is aromatic compound metabolism; naphthalene degradation. Involved in the naphthalene and naphthalenesulfonate catabolic pathway. Catalyzes the meta-cleavage of 1,2-dihydroxynaphthalene (1,2-DHN) to yield 2-hydroxychromene-2-carboxylic acid. Can also cleave 1,2,5-trihydroxynaphthalene (1,2,5-THN), 1,2,6-trihydroxynaphthalene (1,2,6-THN), 1,2,7-trihydroxynaphthalene (1,2,7-THN), 2,3-dihydroxybiphenyl, 3,4-dihydroxybiphenyl, catechol, 3-methylcatechol and 4-methylcatechol. The chain is 1,2-dihydroxynaphthalene dioxygenase (nsaC) from Sphingobium xenophagum.